A 394-amino-acid chain; its full sequence is Elongation factor Tu (394 aa).

A tr-type G domain is found at 10–204; that stretch reads KEHANIGTIG…AVDDYIPTPE (195 aa). Residues 19–26 form a G1 region; the sequence is GHVDHGKT. 19–26 is a GTP binding site; sequence GHVDHGKT. Threonine 26 is a Mg(2+) binding site. Residues 60 to 64 are G2; the sequence is GITIN. A G3 region spans residues 81–84; that stretch reads DCPG. GTP-binding positions include 81–85 and 136–139; these read DCPGH and NKVD. The tract at residues 136-139 is G4; sequence NKVD. The segment at 174–176 is G5; the sequence is SAL.

Belongs to the TRAFAC class translation factor GTPase superfamily. Classic translation factor GTPase family. EF-Tu/EF-1A subfamily. As to quaternary structure, monomer.

The protein localises to the cytoplasm. The catalysed reaction is GTP + H2O = GDP + phosphate + H(+). In terms of biological role, GTP hydrolase that promotes the GTP-dependent binding of aminoacyl-tRNA to the A-site of ribosomes during protein biosynthesis. The sequence is that of Elongation factor Tu from Staphylococcus haemolyticus (strain JCSC1435).